The primary structure comprises 207 residues: Small ribosomal subunit protein uS4 (207 aa).

Residues 31 to 55 (KCKLDSKPGQHGRTSGARTSDYGTQ) are disordered. Residues 42–53 (GRTSGARTSDYG) show a composition bias toward polar residues. One can recognise an S4 RNA-binding domain in the interval 97 to 160 (SRLDNVVYRM…KKQARIVEAL (64 aa)).

It belongs to the universal ribosomal protein uS4 family. Part of the 30S ribosomal subunit. Contacts protein S5. The interaction surface between S4 and S5 is involved in control of translational fidelity.

Functionally, one of the primary rRNA binding proteins, it binds directly to 16S rRNA where it nucleates assembly of the body of the 30S subunit. With S5 and S12 plays an important role in translational accuracy. The protein is Small ribosomal subunit protein uS4 of Burkholderia ambifaria (strain ATCC BAA-244 / DSM 16087 / CCUG 44356 / LMG 19182 / AMMD) (Burkholderia cepacia (strain AMMD)).